Consider the following 317-residue polypeptide: Hps1-dma1 cluster cytochrome P450 monooxygenase cyp3.1 (317 aa).

Residues 183 to 205 form a disordered region; it reads PAIETDRKTSSHSRSPTALADKQ. Residue Cys260 coordinates heme.

It belongs to the cytochrome P450 family. The cofactor is heme.

The protein operates within secondary metabolite biosynthesis. Functionally, cytochrome P450 monooxygenase; part of the hps1-dma1 gene cluster that probably mediates the biosynthesis a derivative of cyclopiazonic acid (CPA). The hybrid polyketide synthase-nonribosomal peptide synthetase (PKS-NRPS) nps1 might incorporates acetyl-CoA, malonyl-CoA, and tryptophan (Trp) and utilizes a C-terminal redox-incompetent reductase domain to make and release the tryptophan tetramic acid, cyclo-acetoacetyl-L-tryptophan (c-AATrp), as the first intermediate in the pathway. In addition, the cluster also includes the tryptophan dimethylallyltransferase dma1, the FAD-dependent oxidoreductase toxD, the cytochrome P450 monooxygenase cyp3.1 and the methyltransferase DOTSEDRAFT_139328; the latter 2 being not present in all CPA-producing fungi but involved in additional modifications that occur in biosynthesis the of a range of CPA and CPA-like products. Further studies are required to clarify whether the CPA-like hps1-dma1 cluster is functional or a non-functional relic reflecting evolution of D.septosporum. The sequence is that of Hps1-dma1 cluster cytochrome P450 monooxygenase cyp3.1 (cyp3.1) from Dothistroma septosporum (strain NZE10 / CBS 128990) (Red band needle blight fungus).